A 236-amino-acid polypeptide reads, in one-letter code: Biosynthetic peptidoglycan transglycosylase (236 aa).

A helical membrane pass occupies residues 12–31 (ALLWFAASSIVLVLVFRWVP).

The protein belongs to the glycosyltransferase 51 family.

It is found in the cell inner membrane. It catalyses the reaction [GlcNAc-(1-&gt;4)-Mur2Ac(oyl-L-Ala-gamma-D-Glu-L-Lys-D-Ala-D-Ala)](n)-di-trans,octa-cis-undecaprenyl diphosphate + beta-D-GlcNAc-(1-&gt;4)-Mur2Ac(oyl-L-Ala-gamma-D-Glu-L-Lys-D-Ala-D-Ala)-di-trans,octa-cis-undecaprenyl diphosphate = [GlcNAc-(1-&gt;4)-Mur2Ac(oyl-L-Ala-gamma-D-Glu-L-Lys-D-Ala-D-Ala)](n+1)-di-trans,octa-cis-undecaprenyl diphosphate + di-trans,octa-cis-undecaprenyl diphosphate + H(+). The protein operates within cell wall biogenesis; peptidoglycan biosynthesis. Functionally, peptidoglycan polymerase that catalyzes glycan chain elongation from lipid-linked precursors. This chain is Biosynthetic peptidoglycan transglycosylase, found in Pseudomonas putida (strain GB-1).